Reading from the N-terminus, the 133-residue chain is Large-conductance mechanosensitive channel (133 aa).

The next 2 membrane-spanning stretches (helical) occupy residues 10–30 and 76–96; these read FAVK…GAFG and GAFI…FSMV.

Belongs to the MscL family. In terms of assembly, homopentamer.

The protein localises to the cell inner membrane. Channel that opens in response to stretch forces in the membrane lipid bilayer. May participate in the regulation of osmotic pressure changes within the cell. The protein is Large-conductance mechanosensitive channel of Haemophilus ducreyi (strain 35000HP / ATCC 700724).